The following is a 188-amino-acid chain: MTQSVPAIFLDRDGTVNVDHGYVHEIDNFQFIDGVIDACRELKEMGFALVLVTNQSGIARGMFTEEQFLSLTEWMDWSLADRGVDLDGIYFCPHHPDGSVAEFSETCECRKPLPGMLLQAQNELNIDMAASYMVGDKIEDMQAALAANIGTKVLVRTGKPVTAEGEAAADWVLNSLADLPKAIKARYK.

Aspartate 11 functions as the Nucleophile in the catalytic mechanism. Mg(2+) contacts are provided by aspartate 11 and aspartate 13. Residues 11–13 (DRD), 19–22 (DHGY), and 53–56 (TNQS) contribute to the substrate site. Aspartate 13 functions as the Proton donor in the catalytic mechanism. Zn(2+) is bound by residues cysteine 92, histidine 94, cysteine 107, and cysteine 109. 110–111 (RK) lines the substrate pocket. Mg(2+) contacts are provided by aspartate 136 and lysine 137. A substrate-binding site is contributed by lysine 137.

The protein belongs to the GmhB family. As to quaternary structure, monomer. The cofactor is Mg(2+). Zn(2+) is required as a cofactor.

The protein localises to the cytoplasm. It carries out the reaction D-glycero-beta-D-manno-heptose 1,7-bisphosphate + H2O = D-glycero-beta-D-manno-heptose 1-phosphate + phosphate. It functions in the pathway nucleotide-sugar biosynthesis; ADP-L-glycero-beta-D-manno-heptose biosynthesis; ADP-L-glycero-beta-D-manno-heptose from D-glycero-beta-D-manno-heptose 7-phosphate: step 2/4. It participates in bacterial outer membrane biogenesis; LPS core biosynthesis. Its function is as follows. Converts the D-glycero-beta-D-manno-heptose 1,7-bisphosphate intermediate into D-glycero-beta-D-manno-heptose 1-phosphate by removing the phosphate group at the C-7 position. This Yersinia pestis protein is D-glycero-beta-D-manno-heptose-1,7-bisphosphate 7-phosphatase (gmhB).